Consider the following 570-residue polypeptide: MSEKHPGPLVVEGKLSDAERMKLESNYLRGTIAEDLNDGLTGGFKGDNFLLIRFHGMYQQDDRDIRAERAEQKLEPRHAMLLRCRLPGGVITTTQWQAIDKFAADNTIYGSIRLTNRQTFQFHGILKKNVKPVHQMLHSVGLDALATANDMNRNVLCTSNPYESQLHAEAYEWAKKISEHLLPRTRAYAEIWLDQEKVAITDEEPILGQTYLPRKFKTTVVIPPQNDIDLHANDMNFVAIAENGKLVGFNLLVGGGLSIEHGNKKTYARTASEFGYLPLEHTLAVAEAVVTTQRDWGNRTDRKNAKTKYTLERVGLETFKAEVERRAGIKFEPIRPYEFTGRGDRIGWVKGIDNNWHLTLFIENGRILDYPGRPLKTGLLEIAKIHQGEFRITANQNLIIASVPESQKAKIETLARDHGLMNAVSAQRENSMACVSFPTCPLAMAEAERFLPSFTDKVEAILEKHGIPDEHIVMRVTGCPNGCGRAMLAEIGLVGKAPGRYNLHLGGNRIGTRIPRMYQENITEPDILASLDELIGRWAKEREAGEGFGDFTVRAGIIRPVLDPARDFWE.

Residues Cys434, Cys440, Cys479, and Cys483 each contribute to the [4Fe-4S] cluster site. Cys483 is a siroheme binding site.

Belongs to the nitrite and sulfite reductase 4Fe-4S domain family. In terms of assembly, alpha(8)-beta(8). The alpha component is a flavoprotein, the beta component is a hemoprotein. It depends on siroheme as a cofactor. [4Fe-4S] cluster serves as cofactor.

The enzyme catalyses hydrogen sulfide + 3 NADP(+) + 3 H2O = sulfite + 3 NADPH + 4 H(+). It participates in sulfur metabolism; hydrogen sulfide biosynthesis; hydrogen sulfide from sulfite (NADPH route): step 1/1. Functionally, component of the sulfite reductase complex that catalyzes the 6-electron reduction of sulfite to sulfide. This is one of several activities required for the biosynthesis of L-cysteine from sulfate. The chain is Sulfite reductase [NADPH] hemoprotein beta-component from Salmonella enteritidis PT4 (strain P125109).